Reading from the N-terminus, the 162-residue chain is Caveolin-2 (162 aa).

The Cytoplasmic segment spans residues 1–86 (MGLETEKADV…FEISKYVMYK (86 aa)). Y19 carries the phosphotyrosine; by SRC modification. S20 and S23 each carry phosphoserine. Residue Y27 is modified to Phosphotyrosine; by SRC. S36 carries the phosphoserine modification. Residues 87-107 (FLTVFLSIPLAFLAGILFATL) constitute an intramembrane region (helical). Residues 108-162 (SCLHIWIIMPFVKTCLMVLPSVQTIWKSVTDAIIAPLCTSIGRSFSSVSLQLSHD) are Cytoplasmic-facing.

Belongs to the caveolin family. In terms of assembly, monomer or homodimer. Interacts with CAV1; the interaction forms a stable heterooligomeric complex that is required for targeting to lipid rafts and for caveolae formation. Tyrosine phosphorylated forms do not form heterooligomers with the Tyr-19-phosphorylated form existing as a monomer or dimer, and the Tyr-27-form as a monomer only. Interacts (tyrosine phosphorylated form) with the SH2 domain-containing proteins, RASA1, NCK1 and SRC. Interacts (tyrosine phosphorylated form) with INSR, the interaction (Tyr-27-phosphorylated form) is increased on insulin stimulation. Interacts (Tyr-19 phosphorylated form) with MAPK1 (phosphorylated form); the interaction, promoted by insulin, leads to nuclear location and MAPK1 activation. Interacts with STAT3; the interaction is increased on insulin-induced tyrosine phosphorylation leading to STAT activation. Post-translationally, phosphorylated on serine and tyrosine residues. CAV1 promotes phosphorylation on Ser-23 which then targets the complex to the plasma membrane, lipid rafts and caveolae. Phosphorylation on Ser-36 appears to modulate mitosis in endothelial cells. Phosphorylation on both Tyr-19 and Tyr-27 is required for insulin-induced 'Ser-727' phosphorylation of STAT3 and its activation. Phosphorylation on Tyr-19 is required for insulin-induced phosphorylation of MAPK1 and DNA binding of STAT3. Tyrosine phosphorylation is induced by both EGF and insulin (By. similarity).

It is found in the nucleus. The protein localises to the cytoplasm. The protein resides in the golgi apparatus membrane. Its subcellular location is the cell membrane. It localises to the membrane. It is found in the caveola. May act as a scaffolding protein within caveolar membranes. Interacts directly with G-protein alpha subunits and can functionally regulate their activity. Acts as an accessory protein in conjunction with CAV1 in targeting to lipid rafts and driving caveolae formation. The Ser-36 phosphorylated form has a role in modulating mitosis in endothelial cells. Positive regulator of cellular mitogenesis of the MAPK signaling pathway. Required for the insulin-stimulated nuclear translocation and activation of MAPK1 and STAT3, and the subsequent regulation of cell cycle progression. This Saimiri boliviensis boliviensis (Bolivian squirrel monkey) protein is Caveolin-2 (CAV2).